The sequence spans 900 residues: Bifunctional uridylyltransferase/uridylyl-removing enzyme (900 aa).

A uridylyltransferase region spans residues 1–342 (MPQVDPELFD…WEGESGPIVP (342 aa)). Residues 343 to 705 (LNSRFQVRDG…TTQREFEGGT (363 aa)) form a uridylyl-removing region. In terms of domain architecture, HD spans 461–583 (VDAHTLNVIK…VGDETHLDYL (123 aa)). 2 consecutive ACT domains span residues 706–789 (QIFI…IIQR) and 816–896 (ILEI…PSPS).

The protein belongs to the GlnD family. Mg(2+) serves as cofactor.

It carries out the reaction [protein-PII]-L-tyrosine + UTP = [protein-PII]-uridylyl-L-tyrosine + diphosphate. The enzyme catalyses [protein-PII]-uridylyl-L-tyrosine + H2O = [protein-PII]-L-tyrosine + UMP + H(+). Its activity is regulated as follows. Uridylyltransferase (UTase) activity is inhibited by glutamine, while glutamine activates uridylyl-removing (UR) activity. Its function is as follows. Modifies, by uridylylation and deuridylylation, the PII regulatory proteins (GlnB and homologs), in response to the nitrogen status of the cell that GlnD senses through the glutamine level. Under low glutamine levels, catalyzes the conversion of the PII proteins and UTP to PII-UMP and PPi, while under higher glutamine levels, GlnD hydrolyzes PII-UMP to PII and UMP (deuridylylation). Thus, controls uridylylation state and activity of the PII proteins, and plays an important role in the regulation of nitrogen fixation and metabolism. The protein is Bifunctional uridylyltransferase/uridylyl-removing enzyme of Stutzerimonas stutzeri (strain A1501) (Pseudomonas stutzeri).